A 491-amino-acid polypeptide reads, in one-letter code: Putative mannan endo-1,4-beta-mannosidase 5 (491 aa).

A signal peptide spans 1-31 (METSYREEEARRKASLLHCIFFFLLGALAMA). The substrate site is built by Trp-134 and Asn-248. Glu-249 serves as the catalytic Proton donor. Tyr-330 contacts substrate. Residue Glu-372 is the Nucleophile of the active site. Asn-385 is a glycosylation site (N-linked (GlcNAc...) asparagine). Trp-416 contacts substrate. A glycan (N-linked (GlcNAc...) asparagine) is linked at Asn-471.

Belongs to the glycosyl hydrolase 5 (cellulase A) family. As to expression, expression not detected.

The protein resides in the secreted. It catalyses the reaction Random hydrolysis of (1-&gt;4)-beta-D-mannosidic linkages in mannans, galactomannans and glucomannans.. In Oryza sativa subsp. japonica (Rice), this protein is Putative mannan endo-1,4-beta-mannosidase 5 (MAN5).